Consider the following 340-residue polypeptide: Methionine import ATP-binding protein MetN 2 (340 aa).

The ABC transporter domain occupies 5–244 (VRFESVTKTF…PQAPASKSFV (240 aa)). 41–48 (GYSGAGKS) lines the ATP pocket.

The protein belongs to the ABC transporter superfamily. Methionine importer (TC 3.A.1.24) family. In terms of assembly, the complex is composed of two ATP-binding proteins (MetN), two transmembrane proteins (MetI) and a solute-binding protein (MetQ).

Its subcellular location is the cell membrane. The catalysed reaction is L-methionine(out) + ATP + H2O = L-methionine(in) + ADP + phosphate + H(+). It carries out the reaction D-methionine(out) + ATP + H2O = D-methionine(in) + ADP + phosphate + H(+). In terms of biological role, part of the ABC transporter complex MetNIQ involved in methionine import. Responsible for energy coupling to the transport system. The chain is Methionine import ATP-binding protein MetN 2 from Rhodococcus jostii (strain RHA1).